Here is a 614-residue protein sequence, read N- to C-terminus: UvrABC system protein C (614 aa).

Residues 14–91 (TSPGCYIHKD…IKENKPKYNI (78 aa)) enclose the GIY-YIG domain. Residues 196-231 (NKIIDELKGKMAAAAQTMEFERAAEYRDLIQAIGTL) enclose the UVR domain. The disordered stretch occupies residues 595-614 (LPQVAEERVDYQTEGNHNKP).

This sequence belongs to the UvrC family. In terms of assembly, interacts with UvrB in an incision complex.

The protein localises to the cytoplasm. Functionally, the UvrABC repair system catalyzes the recognition and processing of DNA lesions. UvrC both incises the 5' and 3' sides of the lesion. The N-terminal half is responsible for the 3' incision and the C-terminal half is responsible for the 5' incision. The polypeptide is UvrABC system protein C (Streptococcus pneumoniae (strain Taiwan19F-14)).